The following is a 678-amino-acid chain: Glycine--tRNA ligase beta subunit (678 aa).

Belongs to the class-II aminoacyl-tRNA synthetase family. As to quaternary structure, tetramer of two alpha and two beta subunits.

The protein resides in the cytoplasm. The catalysed reaction is tRNA(Gly) + glycine + ATP = glycyl-tRNA(Gly) + AMP + diphosphate. This Streptococcus pneumoniae (strain Taiwan19F-14) protein is Glycine--tRNA ligase beta subunit.